A 585-amino-acid polypeptide reads, in one-letter code: SLAIN motif-containing protein-like (585 aa).

Disordered stretches follow at residues 1–34 (MVVP…PNLT), 55–125 (NQTL…RVEE), 324–365 (QDYA…EDEC), 402–476 (PRLS…SDGQ), and 492–585 (GSMS…DGCY). Polar residues predominate over residues 68–83 (GGTNNSNLKAGSNINN). The span at 327–345 (ASTSASRRSSSASLQSLRR) shows a compositional bias: low complexity. The span at 351 to 365 (QEFDSYSQEDEEDEC) shows a compositional bias: acidic residues. Composition is skewed to polar residues over residues 425 to 434 (PNLTPRTSLR), 441 to 476 (NSRS…SDGQ), and 549 to 563 (ASPS…TPRS). Residues 575-585 (LTDESWKDGCY) are compositionally biased toward basic and acidic residues.

Belongs to the SLAIN motif-containing family.

This Danio rerio (Zebrafish) protein is SLAIN motif-containing protein-like.